The following is a 235-amino-acid chain: NADH-quinone oxidoreductase subunit B 2 (235 aa).

The span at 1–14 (MGLTSRPTPASRQP) shows a compositional bias: low complexity. Residues 1–24 (MGLTSRPTPASRQPASPPPADPVL) form a disordered region. Residues C63, C64, C129, and C159 each contribute to the [4Fe-4S] cluster site. Residues 188 to 235 (TGATGGGPSTDALRSGLVAAPTAPGPTAPASTAPGPTAPAPTQDEERR) are disordered.

It belongs to the complex I 20 kDa subunit family. NDH-1 is composed of 14 different subunits. Subunits NuoB, C, D, E, F, and G constitute the peripheral sector of the complex. Requires [4Fe-4S] cluster as cofactor.

It is found in the cell membrane. It carries out the reaction a quinone + NADH + 5 H(+)(in) = a quinol + NAD(+) + 4 H(+)(out). Functionally, NDH-1 shuttles electrons from NADH, via FMN and iron-sulfur (Fe-S) centers, to quinones in the respiratory chain. The immediate electron acceptor for the enzyme in this species is believed to be a menaquinone. Couples the redox reaction to proton translocation (for every two electrons transferred, four hydrogen ions are translocated across the cytoplasmic membrane), and thus conserves the redox energy in a proton gradient. In Streptomyces griseus subsp. griseus (strain JCM 4626 / CBS 651.72 / NBRC 13350 / KCC S-0626 / ISP 5235), this protein is NADH-quinone oxidoreductase subunit B 2.